Here is a 280-residue protein sequence, read N- to C-terminus: S-methyl-5'-thioadenosine phosphorylase (280 aa).

Residues Ser18, 60 to 61 (RH), and 93 to 94 (TA) each bind phosphate. Met196 contacts substrate. Thr197 is a binding site for phosphate. 220–222 (DYD) is a binding site for substrate.

Belongs to the PNP/MTAP phosphorylase family. MTAP subfamily. In terms of assembly, homotrimer.

Its subcellular location is the cytoplasm. The protein localises to the nucleus. The catalysed reaction is S-methyl-5'-thioadenosine + phosphate = 5-(methylsulfanyl)-alpha-D-ribose 1-phosphate + adenine. It participates in amino-acid biosynthesis; L-methionine biosynthesis via salvage pathway; S-methyl-5-thio-alpha-D-ribose 1-phosphate from S-methyl-5'-thioadenosine (phosphorylase route): step 1/1. Catalyzes the reversible phosphorylation of S-methyl-5'-thioadenosine (MTA) to adenine and 5-methylthioribose-1-phosphate. Involved in the breakdown of MTA, a major by-product of polyamine biosynthesis. Responsible for the first step in the methionine salvage pathway after MTA has been generated from S-adenosylmethionine. Has broad substrate specificity with 6-aminopurine nucleosides as preferred substrates. This Ciona intestinalis (Transparent sea squirt) protein is S-methyl-5'-thioadenosine phosphorylase.